The following is an 872-amino-acid chain: Probable GPI-anchored adhesin-like protein PGA25 (872 aa).

The signal sequence occupies residues 1–19 (MKVTAVSSVLLTVAALTNA). Residues 43 to 65 (PAAAPAAQPAAQPTTQSPADQPT) are compositionally biased toward low complexity. 3 disordered regions span residues 43-383 (PAAA…TIIP), 492-517 (KPTGSGSITVLPTKSTTTDDDDDETD), and 623-809 (PDDW…ECDT). Residues 66–83 (VQSPVSSDQPSTAQPVAQ) are compositionally biased toward polar residues. Composition is skewed to low complexity over residues 84-110 (NNLLLDSSNSTLVVPSSSKSSTTTRST) and 125-171 (SSEA…SSSS). An N-linked (GlcNAc...) asparagine glycan is attached at Asn92. Acidic residues predominate over residues 196–207 (ETDDEDCVEETE). 3 stretches are compositionally biased toward low complexity: residues 208–225 (SPTSAPASAPTTSKVATT), 242–260 (SSAPISSAESSPTVASSTT), and 274–293 (SSVPSSSAETSTTVASNTTT). A glycan (N-linked (GlcNAc...) asparagine) is linked at Asn290. A compositionally biased stretch (acidic residues) spans 317-328 (AEEDDEECEDPT). Residues 349–363 (TSQSKTSVSSVVSKS) are compositionally biased toward low complexity. Acidic residues predominate over residues 366–376 (EDDDDETECET). Over residues 495-506 (GSGSITVLPTKS) the composition is skewed to polar residues. Composition is skewed to acidic residues over residues 624-635 (DDWEDDGYEGED) and 646-659 (DDGEWEWYEEDDGE). Gly residues-rich tracts occupy residues 666 to 692 (SSSGSGTGSWWGSGAGSSGGTTSGSGS), 701 to 710 (SSGGTWGGSG), and 731 to 740 (SWWGGSGSGS). Low complexity predominate over residues 741 to 760 (SSGSSSGVSSGDSGSSSVTG). The span at 761-771 (GSSGSWWGGSG) shows a compositional bias: gly residues. The span at 780-808 (DGYDDEDDQTPEPECDDEDDSWDDDEECD) shows a compositional bias: acidic residues. A lipid anchor (GPI-anchor amidated alanine) is attached at Ala845. A propeptide spans 846–872 (QSVTQIENIGGKVSASGLFVVLGLLLI) (removed in mature form).

It belongs to the HYR1/IFF family. The GPI-anchor is attached to the protein in the endoplasmic reticulum and serves to target the protein to the cell surface. There, the glucosamine-inositol phospholipid moiety is cleaved off and the GPI-modified mannoprotein is covalently attached via its lipidless GPI glycan remnant to the 1,6-beta-glucan of the outer cell wall layer.

The protein localises to the secreted. It localises to the cell wall. The protein resides in the membrane. Its function is as follows. Probable GPI-anchored cell wall protein involved in cell wall organization, hyphal growth, as well as in host-fungal interaction and virulence. This Candida albicans (strain SC5314 / ATCC MYA-2876) (Yeast) protein is Probable GPI-anchored adhesin-like protein PGA25 (PGA25).